Here is a 219-residue protein sequence, read N- to C-terminus: MTQDEMKKAAGWAALQYVKKDTIVGVGTGSTVNHFIDALATMKDDIEGAVSSSEASTKKLIELGIEVFDLNSVDLIDVYVDGADEINDRMDMIKGGGAALTREKIVAAVAKRFICIVDNTKQVPILGEFPLPVEVIPMARSYVARELVKLGGDPVYRQGVITDNGNVILDVYNMKILDPKVMETKINAIVGVVTNGLFANRGADVLLVGTPDGVNTITL.

Substrate is bound by residues 28 to 31 (TGST), 81 to 84 (DGAD), and 94 to 97 (KGGG). The active-site Proton acceptor is the glutamate 103. Lysine 121 is a binding site for substrate.

It belongs to the ribose 5-phosphate isomerase family. In terms of assembly, homodimer.

The enzyme catalyses aldehydo-D-ribose 5-phosphate = D-ribulose 5-phosphate. It functions in the pathway carbohydrate degradation; pentose phosphate pathway; D-ribose 5-phosphate from D-ribulose 5-phosphate (non-oxidative stage): step 1/1. Its function is as follows. Catalyzes the reversible conversion of ribose-5-phosphate to ribulose 5-phosphate. The chain is Ribose-5-phosphate isomerase A from Shewanella frigidimarina (strain NCIMB 400).